Consider the following 385-residue polypeptide: MVEDFKVTPWEVEGVVDYNKLIEHFGTSPLTEELLEKTAELTKSELPLFFRRKFFFSHRDYDKVLQDYEEGRGFFLYTGRGPSGPMHIGHIIPFFATKWLQEKFGVNLYIQITDDEKFLFKENLTFEDTKHWAYENILDIIAVGFDPDKTFIFQNSEFTKIYEMAIPIAKKINFSMAKAVFGFTEQSKIGMIFFPAIQIAPTFFEKRRCLIPAAIDQDPYWRLQRDFAESLGYYKTAAIHSKFVPSLTSLSGKMSASKPETAIYLTDSPEDVEKKVWKFALTGGRPTLKEQREKGGEPEKCVVFKWLEIFFEEDDKKLKERYYACKNGELTCGECKRYLISKIQEFLKEHQKRRKKAEKQIEKFKYTGKLAQEMWDKAIPEPLKG.

Residues 82 to 90 (PSGPMHIGH) carry the 'HIGH' region motif. A 'KMSKS' region motif is present at residues 253–257 (KMSAS).

Belongs to the class-I aminoacyl-tRNA synthetase family.

The protein localises to the cytoplasm. The catalysed reaction is tRNA(Trp) + L-tryptophan + ATP = L-tryptophyl-tRNA(Trp) + AMP + diphosphate + H(+). This Pyrococcus abyssi (strain GE5 / Orsay) protein is Tryptophan--tRNA ligase.